A 653-amino-acid chain; its full sequence is 1-deoxy-D-xylulose-5-phosphate synthase (653 aa).

Thiamine diphosphate-binding positions include His-86 and 127–129 (GHS). Residue Asp-158 participates in Mg(2+) binding. Thiamine diphosphate is bound by residues 159 to 160 (GA), Asn-187, and Phe-294. Asn-187 is a Mg(2+) binding site. The segment covering 309–324 (KLEKTTSEPPPKKEPR) has biased composition (basic and acidic residues). The interval 309-343 (KLEKTTSEPPPKKEPRSPNAATAEPEAQPKPQPKP) is disordered. Glu-395 serves as a coordination point for thiamine diphosphate.

It belongs to the transketolase family. DXPS subfamily. In terms of assembly, homodimer. It depends on Mg(2+) as a cofactor. The cofactor is thiamine diphosphate.

It carries out the reaction D-glyceraldehyde 3-phosphate + pyruvate + H(+) = 1-deoxy-D-xylulose 5-phosphate + CO2. It functions in the pathway metabolic intermediate biosynthesis; 1-deoxy-D-xylulose 5-phosphate biosynthesis; 1-deoxy-D-xylulose 5-phosphate from D-glyceraldehyde 3-phosphate and pyruvate: step 1/1. Catalyzes the acyloin condensation reaction between C atoms 2 and 3 of pyruvate and glyceraldehyde 3-phosphate to yield 1-deoxy-D-xylulose-5-phosphate (DXP). This is 1-deoxy-D-xylulose-5-phosphate synthase from Chromohalobacter salexigens (strain ATCC BAA-138 / DSM 3043 / CIP 106854 / NCIMB 13768 / 1H11).